Reading from the N-terminus, the 60-residue chain is Large ribosomal subunit protein bL32 (60 aa).

Belongs to the bacterial ribosomal protein bL32 family.

The sequence is that of Large ribosomal subunit protein bL32 from Azotobacter vinelandii (strain DJ / ATCC BAA-1303).